The sequence spans 41 residues: Putative toxic protein TimP (41 aa).

The hydrophobic stretch at 1 to 17 threads the membrane; sequence MKIRCFCIVLIVSGALL.

It belongs to the TimP toxin family.

It localises to the cell inner membrane. Functionally, putative toxic component of a potential type I toxin-antitoxin (TA) system. Neutralized by sRNA antitoxin TimR which binds to the 5' UTR of timP mRNA and inhibits translation. The antitoxin gene is encoded immediately upstream and transcribed divergently from the toxin gene; antitoxin RNA is less stable than timP mRNA. The chain is Putative toxic protein TimP from Escherichia coli (strain K12).